Reading from the N-terminus, the 371-residue chain is Enterobactin C-glucosyltransferase (371 aa).

The protein belongs to the glycosyltransferase 28 family.

Its subcellular location is the cytoplasm. It carries out the reaction enterobactin + UDP-alpha-D-glucose = monoglucosyl-enterobactin + UDP. The enzyme catalyses monoglucosyl-enterobactin + UDP-alpha-D-glucose = diglucosyl-enterobactin + UDP + H(+). The catalysed reaction is diglucosyl-enterobactin + UDP-alpha-D-glucose = triglucosyl-enterobactin + UDP + H(+). Its pathway is siderophore biosynthesis; enterobactin biosynthesis. In terms of biological role, catalyzes the successive monoglucosylation, diglucosylation and triglucosylation of enterobactin (Ent). Transfers glucosyl groups from uridine-5'-diphosphoglucose (UDP-Glc) to C5 of one, two or three of the 2,3-dihydroxybenzoyl (DHB) units of Ent to yield monoglucosyl-C-Ent (MGE), diglucosyl-C-Ent (DGE) and triglucosyl-C-Ent (TGE). Glucosylation decreases the membrane affinity of Ent and increases the iron acquisition rate. The sequence is that of Enterobactin C-glucosyltransferase from Escherichia coli O6:H1 (strain CFT073 / ATCC 700928 / UPEC).